A 369-amino-acid polypeptide reads, in one-letter code: MVRSGKKAVVLATVAFCATSVVQKTCGFVPSPLRQRAAAAGAAASVATMFAPAAFADEIGDAAKTLGDASYAFAKEVDWNNGIFLQAPGKLQPLAALKAIDKMIVMGAAADPQLLKAAAEAHHKAITTVSGANGVTSRADWDNVNAALGRVISAVPEKMVMDVYNSVAKITDPKVPAYMNSLVNGADAEKAYAGFLAFKDVVKKNQVTSAAGPATVPSGDTIGVAAQKLSDASYPFLKQIDWLSDVYLKPLPGVSAQQSLKAIDRMIVMGAQADGNALKAAAEAHHKAIGSIDAKGVTSAADYAEVNAAIGRVVASVPKSTVMDVYKAMASVTDTGIPLNMFSKVNPLDANAAAKAFYTFKDVVLAAQR.

Residues 1–56 (MVRSGKKAVVLATVAFCATSVVQKTCGFVPSPLRQRAAAAGAAASVATMFAPAAFA) constitute a chloroplast transit peptide. 2 repeat units span residues 57–219 (DEIG…VPSG) and 220–369 (DTIG…AAQR).

In terms of assembly, homotrimer.

The protein resides in the plastid. It is found in the chloroplast. Functionally, water-soluble antenna for capture of solar energy in the blue-green range. Peridinin is an asymmetric carotenoid. In Amphidinium carterae (Dinoflagellate), this protein is Peridinin-chlorophyll a-binding protein 2, chloroplastic.